A 389-amino-acid chain; its full sequence is S-adenosylmethionine synthase (389 aa).

Position 15 (His15) interacts with ATP. Asp17 provides a ligand contact to Mg(2+). Glu43 is a binding site for K(+). L-methionine contacts are provided by Glu56 and Gln99. Residues 99–109 (QSPDIAQGVNE) are flexible loop. ATP is bound by residues 166-168 (DAK), 234-235 (RF), Asp243, 249-250 (RK), Ala266, and Lys270. L-methionine is bound at residue Asp243. Lys274 lines the L-methionine pocket.

Belongs to the AdoMet synthase family. In terms of assembly, homotetramer; dimer of dimers. The cofactor is Mg(2+). K(+) is required as a cofactor.

The protein localises to the cytoplasm. The catalysed reaction is L-methionine + ATP + H2O = S-adenosyl-L-methionine + phosphate + diphosphate. It functions in the pathway amino-acid biosynthesis; S-adenosyl-L-methionine biosynthesis; S-adenosyl-L-methionine from L-methionine: step 1/1. Its function is as follows. Catalyzes the formation of S-adenosylmethionine (AdoMet) from methionine and ATP. The overall synthetic reaction is composed of two sequential steps, AdoMet formation and the subsequent tripolyphosphate hydrolysis which occurs prior to release of AdoMet from the enzyme. The chain is S-adenosylmethionine synthase from Neisseria meningitidis serogroup C / serotype 2a (strain ATCC 700532 / DSM 15464 / FAM18).